We begin with the raw amino-acid sequence, 220 residues long: Probable septum site-determining protein MinC (220 aa).

This sequence belongs to the MinC family. In terms of assembly, interacts with MinD and FtsZ.

Cell division inhibitor that blocks the formation of polar Z ring septums. Rapidly oscillates between the poles of the cell to destabilize FtsZ filaments that have formed before they mature into polar Z rings. Prevents FtsZ polymerization. The chain is Probable septum site-determining protein MinC from Prochlorococcus marinus subsp. pastoris (strain CCMP1986 / NIES-2087 / MED4).